A 311-amino-acid polypeptide reads, in one-letter code: Ribosomal RNA small subunit methyltransferase H (311 aa).

S-adenosyl-L-methionine contacts are provided by residues 34-36, D54, F80, D104, and Q111; that span reads GGH.

This sequence belongs to the methyltransferase superfamily. RsmH family.

It localises to the cytoplasm. The enzyme catalyses cytidine(1402) in 16S rRNA + S-adenosyl-L-methionine = N(4)-methylcytidine(1402) in 16S rRNA + S-adenosyl-L-homocysteine + H(+). Its function is as follows. Specifically methylates the N4 position of cytidine in position 1402 (C1402) of 16S rRNA. The protein is Ribosomal RNA small subunit methyltransferase H of Teredinibacter turnerae (strain ATCC 39867 / T7901).